Here is a 101-residue protein sequence, read N- to C-terminus: NADH-quinone oxidoreductase subunit K (101 aa).

Transmembrane regions (helical) follow at residues 2 to 22 (ISLNHYLIVAALMFVIGLVGV), 29 to 49 (IMLFFSTEILLNAANVALVAI), and 63 to 83 (MFIIAIAASEMAVGLGLLILW).

It belongs to the complex I subunit 4L family. In terms of assembly, NDH-1 is composed of 14 different subunits. Subunits NuoA, H, J, K, L, M, N constitute the membrane sector of the complex.

The protein resides in the cell inner membrane. The enzyme catalyses a quinone + NADH + 5 H(+)(in) = a quinol + NAD(+) + 4 H(+)(out). In terms of biological role, NDH-1 shuttles electrons from NADH, via FMN and iron-sulfur (Fe-S) centers, to quinones in the respiratory chain. The immediate electron acceptor for the enzyme in this species is believed to be ubiquinone. Couples the redox reaction to proton translocation (for every two electrons transferred, four hydrogen ions are translocated across the cytoplasmic membrane), and thus conserves the redox energy in a proton gradient. This chain is NADH-quinone oxidoreductase subunit K, found in Campylobacter hominis (strain ATCC BAA-381 / DSM 21671 / CCUG 45161 / LMG 19568 / NCTC 13146 / CH001A).